The chain runs to 622 residues: MALLQISEPGMAPAPHQRRLAVGIDLGTTNSLVAAVRNSVPEVLPDDAGRVLLPSVVRYLENGGRRIGHDAKAQAATDPRNTIVSVKRFMGRGKAEVEGAANAPYEFVDAPGMVQIRTVDGVKSPVEVSAEILATLRQRAEDTLGDELVGAVITVPAYFDDAQRQATKDAARLAGLNVLRLLNEPTAAAIAYGLDNAAEGLYAVYDLGGGTFDLSILKLTKGVFEVLAAGGDSALGGDDFDHALFDHVLAQAGLDAKTLAPEDVRLLLDRVRVLKEALSSAPEAALDVTLSNGAHLAQTISHDTFATLVEPLVQRTLTPTRKALRDAQVTPADIKGVVLVGGATRMPVIREAVAKYFGQPPLVNLDPDQVVALGAAIQADLLAGNRGSGDDWLLLDVIPLSLGVETMGGLVEKIIPRNSTIPIARAQEFTTFKDGQTAMAIHVVQGERELVADCRSLARFELRGIPPMTAGAARIRVTYQVDADGLLSVFAREQHSGVEASVVVKPSYGLADDDIAKMLEDSFKTAEVDMRARALREAQVEAERMIEATQAALAADGELLDAVERAEIDARVAALRTIAQGDDADAIEAATKALADGTDEFAARRMDKSIKRALSGRRLDEI.

Belongs to the heat shock protein 70 family.

Its function is as follows. Chaperone involved in the maturation of iron-sulfur cluster-containing proteins. Has a low intrinsic ATPase activity which is markedly stimulated by HscB. This is Chaperone protein HscA homolog from Burkholderia multivorans (strain ATCC 17616 / 249).